The following is a 742-amino-acid chain: MTFAASFRALLCVLFCAALVHCKTRTKRYVPHSELWRILAVVDELQREQAAEQRQEDALALALRSDIAGGGGGGQLADNVRWFPETYDYGALADRDVDKRVFDSLGGYEVHGFKKRGSLDAIPQDTDASSDKRALDSLGGFQVHGWKRALDTLGGFQVHGWKRGSGAEKRQVDRLGGFQVHGWKKRALDSLGGFQVHGWKKRGTGGQMHASSPRVVPWGSRSLLADTQSGHRWKRDTELVENRQTTGQQTEVNKRALDSLGGFQVHGWKRSGEAGKRQVDSLGGFQVHGWKRADDQGKRALDSLGGFQVHGWKRFDNSAGEKRALDSLGGFQVHGWKRAGDKKSLDSLGSFQVHGWKRFDNDISGQKRSLDSLGSFQVHGWKRSDQDNKRALDSLGGFQVHGWKRADDDGKRSLDSLGSFQVHGWKRADEDDKKSLDSLGSFQVHGWKRGDEDDKRSLDSLGSFQVHGWKRADEDDKRSLDSLGSFQVHGWKRSDEDDKRSLDSLGSFQVHGWKRSDEDDKRSLDSLGSFQVHGWKRADEDDKRSLDSLGSFQVHGWKRNSPGLKRALDSLGGFQVHGWKRNNEYYSGAENEKRALDSLGGFQVHGWKRDQPGEKRSLDSLGSFQVHGWKRNLNNLGSFQVHGWKKNSADEMGDKPGVESYQDNSGKILSGKAQEFEGGDETGDIHGVVRTLSGVDASGKERENIKELDAKFKTNDGGVGVEHIFVDNVKSADDDVPSAGQM.

An N-terminal signal peptide occupies residues 1–22 (MTFAASFRALLCVLFCAALVHC). A propeptide spanning residues 23–98 (KTRTKRYVPH…YGALADRDVD (76 aa)) is cleaved from the precursor. Positions 117–131 (GSLDAIPQDTDASSD) are cleaved as a propeptide — connecting peptide. 20 propeptides span residues 164-168 (GSGAE), 202-220 (RGTG…PWGS), 236-253 (DTEL…TEVN), 271-275 (SGEAG), 293-297 (ADDQG), 315-321 (FDNSAGE), 339-341 (AGD), 359-366 (FDNDISGQ), 384-388 (SDQDN), 406-410 (ADDDG), 428-432 (ADEDD), 450-454 (GDEDD), 472-476 (ADEDD), 494-498 (SDEDD), 516-520 (SDEDD), 538-542 (ADEDD), 560-564 (NSPGL), 582-592 (NNEYYSGAENE), 610-614 (DQPGE), and 647-742 (NSAD…AGQM).

In terms of tissue distribution, expressed in pleural, pedal, abdominal, buccal and cerebral ganglia.

It is found in the secreted. Initiates organized rhythmic motor output of feeding circuit. The protein is Feeding circuit activating peptides of Aplysia californica (California sea hare).